The primary structure comprises 404 residues: Tryptophan synthase beta chain (404 aa).

The residue at position 90 (Lys90) is an N6-(pyridoxal phosphate)lysine.

This sequence belongs to the TrpB family. In terms of assembly, tetramer of two alpha and two beta chains. Pyridoxal 5'-phosphate is required as a cofactor.

It catalyses the reaction (1S,2R)-1-C-(indol-3-yl)glycerol 3-phosphate + L-serine = D-glyceraldehyde 3-phosphate + L-tryptophan + H2O. It participates in amino-acid biosynthesis; L-tryptophan biosynthesis; L-tryptophan from chorismate: step 5/5. Functionally, the beta subunit is responsible for the synthesis of L-tryptophan from indole and L-serine. This Geobacillus thermodenitrificans (strain NG80-2) protein is Tryptophan synthase beta chain.